Here is a 439-residue protein sequence, read N- to C-terminus: AP-2 complex subunit mu (439 aa).

Residues 172-438 (RNELYIDVVE…LTKAGTYQNR (267 aa)) form the MHD domain.

This sequence belongs to the adaptor complexes medium subunit family. Adaptor protein complex 2 (AP-2) is a heterotetramer composed of two large adaptins (alpha-type and beta-type subunits), a medium adaptin (mu-type subunit AP50) and a small adaptin (sigma-type subunit AP17). Post-translationally, phosphorylated.

The protein resides in the cell membrane. Its subcellular location is the membrane. It is found in the coated pit. Functionally, component of the adaptor complexes which link clathrin to receptors in coated vesicles. Clathrin-associated protein complexes are believed to interact with the cytoplasmic tails of membrane proteins, leading to their selection and concentration. AP50 is a subunit of the plasma membrane adaptor. The chain is AP-2 complex subunit mu (apm2) from Dictyostelium discoideum (Social amoeba).